Consider the following 802-residue polypeptide: E3 ubiquitin-protein ligase RNF10 (802 aa).

3 stretches are compositionally biased toward low complexity: residues Met1–Ser31, Ser78–Lys90, and Ser104–Gly113. The disordered stretch occupies residues Met1 to Gly134. The residue at position 5 (Ser5) is a Phosphoserine. The residue at position 110 (Ser110) is a Phosphoserine. A compositionally biased stretch (basic and acidic residues) spans Gly114–Arg124. Ser128 is subject to Phosphoserine. The RING-type zinc-finger motif lies at Cys225–Tyr267. Positions Asp645–Glu654 are enriched in polar residues. Disordered regions lie at residues Asp645–Leu664, Asp716–Phe753, and Lys767–Lys802. Positions Asp716 to Asn728 are enriched in basic and acidic residues. Over residues Leu793–Lys802 the composition is skewed to polar residues.

Belongs to the RNF10 family. As to quaternary structure, interacts with MEOX2.

The protein resides in the cytoplasm. It is found in the nucleus. It carries out the reaction S-ubiquitinyl-[E2 ubiquitin-conjugating enzyme]-L-cysteine + [acceptor protein]-L-lysine = [E2 ubiquitin-conjugating enzyme]-L-cysteine + N(6)-ubiquitinyl-[acceptor protein]-L-lysine.. It participates in protein modification; protein ubiquitination. In terms of biological role, E3 ubiquitin-protein ligase that catalyzes monoubiquitination of 40S ribosomal proteins RPS2/us5 and RPS3/us3 in response to ribosome stalling. Part of a ribosome quality control that takes place when ribosomes have stalled during translation initiation (iRQC): RNF10 acts by mediating monoubiquitination of RPS2/us5 and RPS3/us3, promoting their degradation by the proteasome. Also promotes ubiquitination of 40S ribosomal proteins in response to ribosome stalling during translation elongation. The action of RNF10 in iRQC is counteracted by USP10. May also act as a transcriptional factor involved in the regulation of MAG (Myelin-associated glycoprotein) expression. Acts as a regulator of Schwann cell differentiation and myelination. This is E3 ubiquitin-protein ligase RNF10 from Rattus norvegicus (Rat).